A 189-amino-acid chain; its full sequence is Peptidyl-tRNA hydrolase (189 aa).

Histidine 15 is a binding site for tRNA. Histidine 20 acts as the Proton acceptor in catalysis. Residues phenylalanine 66, asparagine 68, and asparagine 114 each coordinate tRNA.

This sequence belongs to the PTH family. As to quaternary structure, monomer.

The protein localises to the cytoplasm. The catalysed reaction is an N-acyl-L-alpha-aminoacyl-tRNA + H2O = an N-acyl-L-amino acid + a tRNA + H(+). Functionally, hydrolyzes ribosome-free peptidyl-tRNAs (with 1 or more amino acids incorporated), which drop off the ribosome during protein synthesis, or as a result of ribosome stalling. Its function is as follows. Catalyzes the release of premature peptidyl moieties from peptidyl-tRNA molecules trapped in stalled 50S ribosomal subunits, and thus maintains levels of free tRNAs and 50S ribosomes. The sequence is that of Peptidyl-tRNA hydrolase from Streptococcus equi subsp. equi (strain 4047).